The sequence spans 525 residues: Nucleolar and spindle-associated protein 1-A (525 aa).

Disordered regions lie at residues 46-205, 248-292, 373-397, and 451-525; these read ESKD…LHEA, EKTP…RFSA, TPES…PEKA, and SLSR…VPVQ. The span at 58–69 shows a compositional bias: polar residues; the sequence is SSLTDTDELNSS. Residues 82 to 92 show a composition bias toward basic residues; it reads THRRGRGRKPL. Over residues 106–127 the composition is skewed to polar residues; it reads SVGTGTESLASETDNTQDQNCL. Over residues 160-169 the composition is skewed to basic and acidic residues; the sequence is TTEKRQKKAS. Over residues 270-285 the composition is skewed to polar residues; it reads PPTTGASPSRTPTNQR. Residues 476–494 are compositionally biased toward polar residues; sequence CGSNNNVSVLKNNFKQPHL. Residues 495–514 show a composition bias toward basic and acidic residues; that stretch reads QTREDRRKQHEQDRKGKRDQ.

It belongs to the NUSAP family. As to quaternary structure, interacts with DNA. Interacts with microtubules, ipo7, kpna2 and kpnb1. Microtubule stabilization is inhibited by ipo7 and kpna2, while microtubule bundling is inhibited by kpnb1. Active GTP-bound ran causes dissociation of ipo7 and kpnb1.

The protein localises to the cytoplasm. The protein resides in the nucleus. It is found in the cytoskeleton. It localises to the spindle. Its function is as follows. Microtubule-associated protein with the capacity to bundle and stabilize microtubules. May associate with chromosomes and promote the organization of meiotic or mitotic spindle microtubules around them. In Xenopus laevis (African clawed frog), this protein is Nucleolar and spindle-associated protein 1-A (nusap1-a).